A 122-amino-acid polypeptide reads, in one-letter code: Large ribosomal subunit protein uL14 (122 aa).

This sequence belongs to the universal ribosomal protein uL14 family. In terms of assembly, part of the 50S ribosomal subunit. Forms a cluster with proteins L3 and L19. In the 70S ribosome, L14 and L19 interact and together make contacts with the 16S rRNA in bridges B5 and B8.

Binds to 23S rRNA. Forms part of two intersubunit bridges in the 70S ribosome. This chain is Large ribosomal subunit protein uL14, found in Desulforudis audaxviator (strain MP104C).